We begin with the raw amino-acid sequence, 283 residues long: Bifunctional protein FolD (283 aa).

Residues glycine 166–serine 168 and serine 191 contribute to the NADP(+) site.

This sequence belongs to the tetrahydrofolate dehydrogenase/cyclohydrolase family. Homodimer.

The catalysed reaction is (6R)-5,10-methylene-5,6,7,8-tetrahydrofolate + NADP(+) = (6R)-5,10-methenyltetrahydrofolate + NADPH. It carries out the reaction (6R)-5,10-methenyltetrahydrofolate + H2O = (6R)-10-formyltetrahydrofolate + H(+). It functions in the pathway one-carbon metabolism; tetrahydrofolate interconversion. Its function is as follows. Catalyzes the oxidation of 5,10-methylenetetrahydrofolate to 5,10-methenyltetrahydrofolate and then the hydrolysis of 5,10-methenyltetrahydrofolate to 10-formyltetrahydrofolate. In Pediococcus pentosaceus (strain ATCC 25745 / CCUG 21536 / LMG 10740 / 183-1w), this protein is Bifunctional protein FolD.